A 693-amino-acid chain; its full sequence is Polyribonucleotide nucleotidyltransferase (693 aa).

Positions 489 and 495 each coordinate Mg(2+). Positions 556–615 (PQIHVMNINPAKIKDVVGRGGATVKGIVEKTGAQIDTSDSGEVKVFAKDKKSMDMAVAMI) constitute a KH domain. Residues 625–693 (GQVYKGKIVK…GRVKLSLVAR (69 aa)) form the S1 motif domain.

This sequence belongs to the polyribonucleotide nucleotidyltransferase family. In terms of assembly, component of the RNA degradosome, which is a multiprotein complex involved in RNA processing and mRNA degradation. Requires Mg(2+) as cofactor.

Its subcellular location is the cytoplasm. It catalyses the reaction RNA(n+1) + phosphate = RNA(n) + a ribonucleoside 5'-diphosphate. Involved in mRNA degradation. Catalyzes the phosphorolysis of single-stranded polyribonucleotides processively in the 3'- to 5'-direction. The polypeptide is Polyribonucleotide nucleotidyltransferase (Francisella tularensis subsp. tularensis (strain FSC 198)).